The chain runs to 35 residues: Photosystem II reaction center protein T (35 aa).

The chain crosses the membrane as a helical span at residues 3-23 (ALVYTFLLVSTLGIIFFAIFF).

Belongs to the PsbT family. PSII is composed of 1 copy each of membrane proteins PsbA, PsbB, PsbC, PsbD, PsbE, PsbF, PsbH, PsbI, PsbJ, PsbK, PsbL, PsbM, PsbT, PsbY, PsbZ, Psb30/Ycf12, at least 3 peripheral proteins of the oxygen-evolving complex and a large number of cofactors. It forms dimeric complexes.

The protein resides in the plastid. Its subcellular location is the chloroplast thylakoid membrane. Functionally, found at the monomer-monomer interface of the photosystem II (PS II) dimer, plays a role in assembly and dimerization of PSII. PSII is a light-driven water plastoquinone oxidoreductase, using light energy to abstract electrons from H(2)O, generating a proton gradient subsequently used for ATP formation. This is Photosystem II reaction center protein T from Bassia hyssopifolia (Fivehorn smotherweed).